We begin with the raw amino-acid sequence, 909 residues long: UPF0182 protein Moth_1139 (909 aa).

7 consecutive transmembrane segments (helical) span residues 8 to 28 (FCLL…SHFL), 51 to 71 (VGIR…NLLF), 103 to 123 (LGIL…PLAA), 165 to 185 (LLIT…FIFN), 201 to 221 (LVHF…GFRL), 245 to 265 (LLPG…IIVL), and 277 to 297 (AGIL…PLAV). The segment at 843–862 (PAPAASPQPPSQAATGSPGN) is disordered.

The protein belongs to the UPF0182 family.

The protein localises to the cell membrane. The sequence is that of UPF0182 protein Moth_1139 from Moorella thermoacetica (strain ATCC 39073 / JCM 9320).